Reading from the N-terminus, the 352-residue chain is tRNA N6-adenosine threonylcarbamoyltransferase (352 aa).

3 residues coordinate a divalent metal cation: H114, H118, and Y135. Residues 135–139 (YVSGG), D167, G182, E186, and N283 contribute to the substrate site. D311 lines the a divalent metal cation pocket.

Belongs to the KAE1 / TsaD family. Component of the EKC/KEOPS complex composed of at least BUD32, CGI121, GON7, KAE1 and PCC1; the whole complex dimerizes. A divalent metal cation serves as cofactor.

Its subcellular location is the cytoplasm. The protein resides in the nucleus. The enzyme catalyses L-threonylcarbamoyladenylate + adenosine(37) in tRNA = N(6)-L-threonylcarbamoyladenosine(37) in tRNA + AMP + H(+). Functionally, component of the EKC/KEOPS complex that is required for the formation of a threonylcarbamoyl group on adenosine at position 37 (t(6)A37) in tRNAs that read codons beginning with adenine. The complex is probably involved in the transfer of the threonylcarbamoyl moiety of threonylcarbamoyl-AMP (TC-AMP) to the N6 group of A37. KAE1 likely plays a direct catalytic role in this reaction, but requires other protein(s) of the complex to fulfill this activity. The EKC/KEOPS complex also promotes both telomere uncapping and telomere elongation. The complex is required for efficient recruitment of transcriptional coactivators. The polypeptide is tRNA N6-adenosine threonylcarbamoyltransferase (Phaeosphaeria nodorum (strain SN15 / ATCC MYA-4574 / FGSC 10173) (Glume blotch fungus)).